The sequence spans 296 residues: Dof zinc finger protein DOF3.7 (296 aa).

A disordered region spans residues 41-69; that stretch reads NTRPNATASNGGSGGNTNNTATMETRKAR. Residues 45 to 62 show a composition bias toward low complexity; the sequence is NATASNGGSGGNTNNTAT. The Dof-type zinc finger occupies 74–128; that stretch reads VNCPRCNSTNTKFCYYNNYSLTQPRYFCKGCRRYWTEGGSLRNVPVGGSSRKNKR. Cys-76, Cys-79, Cys-101, and Cys-104 together coordinate Zn(2+). Residues 115 to 146 form a disordered region; it reads RNVPVGGSSRKNKRSSTPLASPSNPKLPDLNP. The segment covering 129–138 has biased composition (polar residues); that stretch reads SSTPLASPSN.

In terms of tissue distribution, expressed in the phloem of the mother plant, including in roots, stem, leaves and flowers, but not present in the seed and embryo. In maturing siliques, found all through the funiculus connecting the placenta to the ovule, but not in the ovule.

The protein localises to the nucleus. Functionally, transcription factor specifically involved in the maternal control of seed germination. Regulates transcription by binding to a 5'-AA[AG]G-3' consensus core sequence. May ensure the inactivity of a component that would be activated to trigger germination as a consequence of red light perception. The chain is Dof zinc finger protein DOF3.7 (DOF3.7) from Arabidopsis thaliana (Mouse-ear cress).